We begin with the raw amino-acid sequence, 283 residues long: Diaminopimelate epimerase (283 aa).

The substrate site is built by Asn-13, Gln-45, and Asn-65. Cys-74 functions as the Proton donor in the catalytic mechanism. Substrate is bound by residues 75-76 (GN), Asn-156, Asn-190, and 208-209 (ER). The active-site Proton acceptor is Cys-217. 218 to 219 (GS) serves as a coordination point for substrate.

This sequence belongs to the diaminopimelate epimerase family. Homodimer.

The protein resides in the cytoplasm. It carries out the reaction (2S,6S)-2,6-diaminopimelate = meso-2,6-diaminopimelate. It functions in the pathway amino-acid biosynthesis; L-lysine biosynthesis via DAP pathway; DL-2,6-diaminopimelate from LL-2,6-diaminopimelate: step 1/1. In terms of biological role, catalyzes the stereoinversion of LL-2,6-diaminopimelate (L,L-DAP) to meso-diaminopimelate (meso-DAP), a precursor of L-lysine and an essential component of the bacterial peptidoglycan. The polypeptide is Diaminopimelate epimerase (Bartonella henselae (strain ATCC 49882 / DSM 28221 / CCUG 30454 / Houston 1) (Rochalimaea henselae)).